We begin with the raw amino-acid sequence, 617 residues long: 1-deoxy-D-xylulose-5-phosphate synthase (617 aa).

Residues H77 and 118–120 (GHS) each bind thiamine diphosphate. D149 serves as a coordination point for Mg(2+). Residues 150-151 (GA), N178, Y287, and E368 contribute to the thiamine diphosphate site. N178 contributes to the Mg(2+) binding site.

It belongs to the transketolase family. DXPS subfamily. In terms of assembly, homodimer. Mg(2+) serves as cofactor. Requires thiamine diphosphate as cofactor.

It carries out the reaction D-glyceraldehyde 3-phosphate + pyruvate + H(+) = 1-deoxy-D-xylulose 5-phosphate + CO2. Its pathway is metabolic intermediate biosynthesis; 1-deoxy-D-xylulose 5-phosphate biosynthesis; 1-deoxy-D-xylulose 5-phosphate from D-glyceraldehyde 3-phosphate and pyruvate: step 1/1. Functionally, catalyzes the acyloin condensation reaction between C atoms 2 and 3 of pyruvate and glyceraldehyde 3-phosphate to yield 1-deoxy-D-xylulose-5-phosphate (DXP). The chain is 1-deoxy-D-xylulose-5-phosphate synthase from Haemophilus ducreyi (strain 35000HP / ATCC 700724).